A 207-amino-acid polypeptide reads, in one-letter code: Dephospho-CoA kinase (207 aa).

Residues 4-203 (VIGLTGGIAS…EEGYIEKPNY (200 aa)) enclose the DPCK domain. Residue 12-17 (ASGKST) participates in ATP binding.

It belongs to the CoaE family.

Its subcellular location is the cytoplasm. It catalyses the reaction 3'-dephospho-CoA + ATP = ADP + CoA + H(+). It participates in cofactor biosynthesis; coenzyme A biosynthesis; CoA from (R)-pantothenate: step 5/5. Its function is as follows. Catalyzes the phosphorylation of the 3'-hydroxyl group of dephosphocoenzyme A to form coenzyme A. The sequence is that of Dephospho-CoA kinase from Staphylococcus aureus (strain USA300).